The chain runs to 526 residues: Zinc finger protein 69 homolog (526 aa).

Residues 1-39 form the SCAN box domain; it reads MPQQLLITLPTEASTWVKLQHPKKAVEGAPLWEDVTKMF. The KRAB domain occupies 76 to 147; it reads LTFKDISIDF…EKEGPGDPSS (72 aa). C2H2-type zinc fingers lie at residues 271 to 293, 299 to 321, 327 to 349, 355 to 377, 383 to 405, 411 to 433, 439 to 461, 467 to 489, and 495 to 517; these read YECN…MRIH, FRCK…QRIH, FECE…HRTH, YVCD…LRTH, FTCN…IRIH, YACT…QRIH, YKCK…KTVH, YECN…QRHH, and YECN…HEIH.

This sequence belongs to the krueppel C2H2-type zinc-finger protein family. In terms of tissue distribution, expressed in visceral and subcutaneous adipose tissue.

The protein localises to the nucleus. Putative transcription factor that appears to regulate lipid metabolism. This chain is Zinc finger protein 69 homolog (ZFP69), found in Homo sapiens (Human).